A 244-amino-acid polypeptide reads, in one-letter code: MSLRLITWDVKDTLLRVRVPVGQQYYAEAKKRGLCVNPGTLETSFRNAYRSHSRLFPNYGLAQGMSSRQWWLDVVLQTFRLSGIEDSDTVQSLAKQLYQDFSTAHNWALVPGAREALDSCTNLGLRMAVISNFDRRLEELLRQCCLERYFDFVVTAESAGVAKPHLGIFHKALSLAKVPPHQAVHVGDDYVNDYCAARMVGMHSYLIHPKTPPKLQWNIPEEHVIQSPEQLIPKLVGVLKNSMT.

It belongs to the HAD-like hydrolase superfamily.

This chain is Haloacid dehalogenase-like hydrolase domain-containing protein 3 (hdhd3), found in Xenopus laevis (African clawed frog).